Consider the following 234-residue polypeptide: Large ribosomal subunit protein uL1 (234 aa).

The protein belongs to the universal ribosomal protein uL1 family. In terms of assembly, part of the 50S ribosomal subunit.

Binds directly to 23S rRNA. The L1 stalk is quite mobile in the ribosome, and is involved in E site tRNA release. Its function is as follows. Protein L1 is also a translational repressor protein, it controls the translation of the L11 operon by binding to its mRNA. The chain is Large ribosomal subunit protein uL1 from Edwardsiella ictaluri (strain 93-146).